Here is a 169-residue protein sequence, read N- to C-terminus: Sec-independent protein translocase protein TatB (169 aa).

Residues 2 to 22 (SPGIGMPELLVVLVLALVVVG) form a helical membrane-spanning segment. A disordered region spans residues 106–169 (NQAETDADKA…AKPVDEIKGR (64 aa)).

It belongs to the TatB family. In terms of assembly, the Tat system comprises two distinct complexes: a TatABC complex, containing multiple copies of TatA, TatB and TatC subunits, and a separate TatA complex, containing only TatA subunits. Substrates initially bind to the TatABC complex, which probably triggers association of the separate TatA complex to form the active translocon.

It is found in the cell inner membrane. In terms of biological role, part of the twin-arginine translocation (Tat) system that transports large folded proteins containing a characteristic twin-arginine motif in their signal peptide across membranes. Together with TatC, TatB is part of a receptor directly interacting with Tat signal peptides. TatB may form an oligomeric binding site that transiently accommodates folded Tat precursor proteins before their translocation. This is Sec-independent protein translocase protein TatB from Maricaulis maris (strain MCS10) (Caulobacter maris).